The sequence spans 249 residues: Cysteine desulfuration protein SufE (249 aa).

Cys-154 acts as the Cysteine persulfide intermediate in catalysis.

The protein belongs to the SufE family. As to quaternary structure, monomer. Interacts with SufS; interaction enhances cysteine desulfurase activity of SufS. Post-translationally, proteolytically cleaved.

The protein localises to the plastid. It is found in the apicoplast. It functions in the pathway cofactor biosynthesis; iron-sulfur cluster biosynthesis. In terms of biological role, participates in sulfur mobilization (SUF) pathway for iron-sulfur (Fe-S) cluster biogenesis. Enhances cysteine desulfurase activity of SufS. Probably functions as a sulfur acceptor for SufS. In Plasmodium falciparum (isolate 3D7), this protein is Cysteine desulfuration protein SufE.